We begin with the raw amino-acid sequence, 797 residues long: Kinesin-like protein KIF18B (797 aa).

The 342-residue stretch at 11-352 (TVAVVVRVRP…LKYANRAKEI (342 aa)) folds into the Kinesin motor domain. ATP is bound at residue 110 to 117 (GATGAGKT). A coiled-coil region spans residues 367-402 (ISKYATICEQLKTEVADLQAKLRAYEDAARDAGKQI). Disordered stretches follow at residues 412–476 (EEAV…PNRL), 528–564 (AAVS…PSVP), 579–640 (LSSP…KEPQ), and 730–797 (KGSS…SGPR). A compositionally biased stretch (polar residues) spans 594-608 (MSNTSRLETPHSLNT). A compositionally biased stretch (low complexity) spans 731–744 (GSSIPKPSSISKGS).

The protein belongs to the TRAFAC class myosin-kinesin ATPase superfamily. Kinesin family.

The protein localises to the nucleus. It is found in the cytoplasm. Its subcellular location is the cytoskeleton. In terms of biological role, may play an important role in microtubule plus-end depolymerizing activity in mitotic cells. The protein is Kinesin-like protein KIF18B (KIF18B) of Gallus gallus (Chicken).